The primary structure comprises 100 residues: METCQMSRSPRERLLLLLLLLLLVPWGTGPASGVALPLAGVFSLRAPGRAWAGLGSPLSRRSLALADDAAFRERARLLAALERRRWLDSYMQKLLLLDAP.

The first 30 residues, 1–30 (METCQMSRSPRERLLLLLLLLLLVPWGTGP), serve as a signal peptide directing secretion. The propeptide occupies 31–59 (ASGVALPLAGVFSLRAPGRAWAGLGSPLS).

This sequence belongs to the parathyroid hormone family. Ligand of high affinity for the PTH2 receptor (PTH2R). As to expression, expressed in testis and, less abundantly, in liver and kidney. Expressed in seminiferous tubuli and several brain regions, including nucleus ruber, caudal paralemniscal nucleus, nucleus centralis pontis, and nucleus subparafascicularis thalami. Expressed in neurons of cerebral cortex and subcortical areas. Expressed in Purkinje cells of cerebellum.

The protein resides in the secreted. Plays a role as a potent and selective agonist of PTH2R resulting in adenyl cyclase activation and intracellular calcium levels elevation. Induces protein kinase C beta activation, recruitment of beta-arrestin and PTH2R internalization. May inhibit cell proliferation via its action of PTH2R activation. Neuropeptide which may also have a role in spermatogenesis. May activate nociceptors and nociceptive circuits. This Mus musculus (Mouse) protein is Tuberoinfundibular peptide of 39 residues (Pth2).